The sequence spans 352 residues: Selenide, water dikinase (352 aa).

The active site involves cysteine 21. ATP-binding positions include lysine 24 and 51 to 53 (TND). Mg(2+) is bound at residue aspartate 54. ATP contacts are provided by residues aspartate 71, aspartate 94, and 141-143 (GHS). Residue aspartate 94 participates in Mg(2+) binding. Aspartate 231 provides a ligand contact to Mg(2+).

It belongs to the selenophosphate synthase 1 family. Class I subfamily. Homodimer. Requires Mg(2+) as cofactor.

The catalysed reaction is hydrogenselenide + ATP + H2O = selenophosphate + AMP + phosphate + 2 H(+). Synthesizes selenophosphate from selenide and ATP. The protein is Selenide, water dikinase of Myxococcus xanthus (strain DK1622).